The primary structure comprises 227 residues: PKHD-type hydroxylase GOX0559 (227 aa).

The region spanning 78-178 (RVYPPLFNRY…RWASFFWSQS (101 aa)) is the Fe2OG dioxygenase domain. Residues His-96, Asp-98, and His-159 each coordinate Fe cation. Arg-169 provides a ligand contact to 2-oxoglutarate.

Fe(2+) is required as a cofactor. The cofactor is L-ascorbate.

This Gluconobacter oxydans (strain 621H) (Gluconobacter suboxydans) protein is PKHD-type hydroxylase GOX0559.